Here is a 330-residue protein sequence, read N- to C-terminus: Polyprenal reductase (330 aa).

Residues 1–19 are Cytoplasmic-facing; it reads MASWVGTELSALNPLRTLW. Residues 20-40 form a helical membrane-spanning segment; that stretch reads LALAAAFLLALLLQLAPAGLL. Residues 41–74 lie on the Lumenal side of the membrane; it reads PNCALFQDLIRYGKTKLSGPRRPAVCRAFDVPKR. The helical transmembrane segment at 75-95 threads the bilayer; sequence YFSHFYVVSVLWNGFLLWFLS. Topologically, residues 96 to 132 are cytoplasmic; that stretch reads RSLFLGAPFPNWLRALLRTLGSTQFRALEMESKASQM. The chain crosses the membrane as a helical span at residues 133-153; sequence LVGELALSAFLVLVFLWVHSV. The Lumenal segment spans residues 154–168; it reads RRLFECFYISVFSNA. A helical transmembrane segment spans residues 169 to 189; sequence VMHVVQYCFGLVYYVLVGLTV. Over 190–206 the chain is Cytoplasmic; sequence LSQVPMDDKNVYMLGKN. A helical membrane pass occupies residues 207 to 227; sequence LLLPARWFHVLGMMMFLWSSA. Over 228 to 277 the chain is Lumenal; sequence HQYECHVILSNLRRNKKGAIVHCQHRIPFGDWFEYVSSANYLAELMIYIS. A helical membrane pass occupies residues 278–298; it reads MAVTFGFHNFTWWLVVAYVFF. Over 299-330 the chain is Cytoplasmic; the sequence is CQALSAFFNHKFYKSTFVSYPKHRKAFLPFLF.

The protein belongs to the steroid 5-alpha reductase family. Polyprenal reductase subfamily.

Its subcellular location is the endoplasmic reticulum membrane. The enzyme catalyses a di-trans,poly-cis-dolichal + NADP(+) = a di-trans,poly-cis-polyprenal + NADPH + H(+). It carries out the reaction a 3-oxo-5alpha-steroid + NADP(+) = a 3-oxo-Delta(4)-steroid + NADPH + H(+). It catalyses the reaction androst-4-ene-3,17-dione + NADPH + H(+) = 5alpha-androstan-3,17-dione + NADP(+). The catalysed reaction is 17beta-hydroxy-5alpha-androstan-3-one + NADP(+) = testosterone + NADPH + H(+). Its pathway is protein modification; protein glycosylation. Its function is as follows. Plays a key role in early steps of protein N-linked glycosylation by being involved in the conversion of polyprenol into dolichol. Acts as a polyprenal reductase that mediates the reduction of polyprenal into dolichal in a NADP-dependent mechanism. Dolichols are required for the synthesis of dolichol-linked monosaccharides and the oligosaccharide precursor used for N-glycosylation. Also able to convert testosterone (T) into 5-alpha-dihydrotestosterone (DHT). In Mesocricetus auratus (Golden hamster), this protein is Polyprenal reductase.